The sequence spans 308 residues: Lipoyl synthase (308 aa).

[4Fe-4S] cluster is bound by residues C48, C53, C59, C74, C78, C81, and S287. Positions 60–277 (WSRHTATYLA…RSVGEALGLF (218 aa)) constitute a Radical SAM core domain.

This sequence belongs to the radical SAM superfamily. Lipoyl synthase family. [4Fe-4S] cluster serves as cofactor.

The protein localises to the cytoplasm. The enzyme catalyses [[Fe-S] cluster scaffold protein carrying a second [4Fe-4S](2+) cluster] + N(6)-octanoyl-L-lysyl-[protein] + 2 oxidized [2Fe-2S]-[ferredoxin] + 2 S-adenosyl-L-methionine + 4 H(+) = [[Fe-S] cluster scaffold protein] + N(6)-[(R)-dihydrolipoyl]-L-lysyl-[protein] + 4 Fe(3+) + 2 hydrogen sulfide + 2 5'-deoxyadenosine + 2 L-methionine + 2 reduced [2Fe-2S]-[ferredoxin]. It participates in protein modification; protein lipoylation via endogenous pathway; protein N(6)-(lipoyl)lysine from octanoyl-[acyl-carrier-protein]: step 2/2. Functionally, catalyzes the radical-mediated insertion of two sulfur atoms into the C-6 and C-8 positions of the octanoyl moiety bound to the lipoyl domains of lipoate-dependent enzymes, thereby converting the octanoylated domains into lipoylated derivatives. The chain is Lipoyl synthase from Chlamydia muridarum (strain MoPn / Nigg).